The chain runs to 709 residues: MFPSLFRLVVFSKRYIFRSSQRLYTSLKQEQSRMSKIMEDLRSDYVPLIASIDVGTTSSRCILFNRWGQDVSKHQIEYSTSASKGKIGVSGLRRPSTAPARETPNAGDIKTSGKPIFSAEGYAIQETKFLKIEELDLDFHNEPTLKFPKPGWVECHPQKLLVNVVQCLASSLLSLQTINSERVANGLPPYKVICMGIANMRETTILWSRRTGKPIVNYGIVWNDTRTIKIVRDKWQNTSVDRQLQLRQKTGLPLLSTYFSCSKLRWFLDNEPLCTKAYEENDLMFGTVDTWLIYQLTKQKAFVSDVTNASRTGFMNLSTLKYDNELLEFWGIDKNLIHMPEIVSSSQYYGDFGIPDWIMEKLHDSPKTVLRDLVKRNLPIQGCLGDQSASMVGQLAYKPGAAKCTYGTGCFLLYNTGTKKLISQHGALTTLAFWFPHLQEYGGQKPELSKPHFALEGSVAVAGAVVQWLRDNLRLIDKSEDVGPIASTVPDSGGVVFVPAFSGLFAPYWDPDARATIMGMSQFTTASHIARAAVEGVCFQARAILKAMSSDAFGEGSKDRDFLEEISDVTYEKSPLSVLAVDGGMSRSNEVMQIQADILGPCVKVRRSPTAECTALGAAIAANMAFKDVNERPLWKDLHDVKKWVFYNGMEKNEQISPEAHPNLKIFRSESDDAERRKHWKYWEVAVERSKGWLKDIEGEHEQVLENFQ.

T56 is a binding site for substrate. R60 serves as a coordination point for ATP. The tract at residues 86-110 is disordered; that stretch reads KIGVSGLRRPSTAPARETPNAGDIK. Residues R201, Y258, and D386 each contribute to the substrate site. Residues T408, G463, and 584–588 each bind ATP; that span reads GMSRS.

Belongs to the FGGY kinase family.

It carries out the reaction glycerol + ATP = sn-glycerol 3-phosphate + ADP + H(+). Its pathway is polyol metabolism; glycerol degradation via glycerol kinase pathway; sn-glycerol 3-phosphate from glycerol: step 1/1. In terms of biological role, key enzyme in the regulation of glycerol uptake and metabolism. Catalyzes the phosphorylation of glycerol to yield sn-glycerol 3-phosphate. This is Glycerol kinase (GUT1) from Saccharomyces cerevisiae (strain ATCC 204508 / S288c) (Baker's yeast).